The sequence spans 162 residues: UPF0114 protein SO_3997 (162 aa).

The next 3 helical transmembrane spans lie at 10 to 32, 53 to 75, and 136 to 156; these read YASRWIMAPIYLGLSLVLLGLGI, LVLVTLSLIDITLVGGLIVMVMF, and IMWYLLIHITFVLSAFAMGYL.

It belongs to the UPF0114 family.

It is found in the cell membrane. This is UPF0114 protein SO_3997 from Shewanella oneidensis (strain ATCC 700550 / JCM 31522 / CIP 106686 / LMG 19005 / NCIMB 14063 / MR-1).